A 413-amino-acid chain; its full sequence is Enhanced ethylene response protein 5 (413 aa).

Residues 216–402 (VTYMYYTGRL…KVVVLSKQDP (187 aa)) form the PCI domain.

In terms of assembly, interacts with EIN2 (via C-terminus). May also interact weakly with CSN8. Interacts with DSS1(V), AMPD, SAC3A, SAC3B and At5g61290 (AC Q9FLK4). Interacts with UCH1 and UCH2. Interacts with NUP1, anchoring the TREX-2 complex on the nuclear pore complex. Expressed at low levels in roots, leaves, stems and shoots. Detected in seedlings, roots, leaves and anthers.

Its subcellular location is the nucleus. Functionally, involved in the regulation of ethylene response. Probable TREX-2 component required for nuclear RNA export. The TREX-2 complex (transcription and export complex 2) functions in docking export-competent ribonucleoprotein particles (mRNPs) to the nuclear entrance of the nuclear pore complex (nuclear basket). TREX-2 participates in mRNA export and accurate chromatin positioning in the nucleus by tethering genes to the nuclear periphery. The sequence is that of Enhanced ethylene response protein 5 from Arabidopsis thaliana (Mouse-ear cress).